The chain runs to 433 residues: Adenosylhomocysteinase A (433 aa).

Substrate is bound by residues Thr-57, Asp-132, Glu-157, Lys-187, and Asp-191. Positions 184-351 (SVTKSKFDNL…EGRLVNLGCA (168 aa)) are NAD binding.

Belongs to the adenosylhomocysteinase family. In terms of assembly, homotetramer. NAD(+) is required as a cofactor.

It is found in the cytoplasm. It catalyses the reaction S-adenosyl-L-homocysteine + H2O = L-homocysteine + adenosine. It functions in the pathway amino-acid biosynthesis; L-homocysteine biosynthesis; L-homocysteine from S-adenosyl-L-homocysteine: step 1/1. Functionally, catalyzes the hydrolysis of S-adenosyl-L-homocysteine to form adenosine and homocysteine. Binds copper ions. The chain is Adenosylhomocysteinase A (ahcy-a) from Xenopus laevis (African clawed frog).